We begin with the raw amino-acid sequence, 403 residues long: Tyrosine--tRNA ligase (403 aa).

Residues 45 to 54 carry the 'HIGH' region motif; the sequence is PTAPDLHLGH. Positions 229–233 match the 'KMSKS' region motif; the sequence is KMSKS. Lys-232 contributes to the ATP binding site. The S4 RNA-binding domain maps to 341 to 402; the sequence is VLLGRLLAEA…GKRRFARIVF (62 aa).

Belongs to the class-I aminoacyl-tRNA synthetase family. TyrS type 2 subfamily. Homodimer.

It localises to the cytoplasm. It catalyses the reaction tRNA(Tyr) + L-tyrosine + ATP = L-tyrosyl-tRNA(Tyr) + AMP + diphosphate + H(+). In terms of biological role, catalyzes the attachment of tyrosine to tRNA(Tyr) in a two-step reaction: tyrosine is first activated by ATP to form Tyr-AMP and then transferred to the acceptor end of tRNA(Tyr). The protein is Tyrosine--tRNA ligase of Geobacter metallireducens (strain ATCC 53774 / DSM 7210 / GS-15).